The primary structure comprises 512 residues: Putative ribose/galactose/methyl galactoside import ATP-binding protein 2 (512 aa).

ABC transporter domains lie at 14–251 (IALT…VGRQ) and 262–507 (TSGN…TQRE). 46–53 (GENGAGKS) is a binding site for ATP.

Belongs to the ABC transporter superfamily. Carbohydrate importer 2 (CUT2) (TC 3.A.1.2) family.

It is found in the cell inner membrane. It carries out the reaction D-ribose(out) + ATP + H2O = D-ribose(in) + ADP + phosphate + H(+). The catalysed reaction is D-galactose(out) + ATP + H2O = D-galactose(in) + ADP + phosphate + H(+). Functionally, part of an ABC transporter complex involved in carbohydrate import. Could be involved in ribose, galactose and/or methyl galactoside import. Responsible for energy coupling to the transport system. The polypeptide is Putative ribose/galactose/methyl galactoside import ATP-binding protein 2 (Burkholderia cenocepacia (strain HI2424)).